Reading from the N-terminus, the 247-residue chain is NifU-like scaffold protein (247 aa).

This sequence belongs to the NifU family. In terms of assembly, homodimer.

The protein resides in the plastid. Its subcellular location is the apicoplast. It participates in cofactor biosynthesis; iron-sulfur cluster biosynthesis. In terms of biological role, binds and transfers [4Fe-4S] iron-sulfur clusters to target proteins. The chain is NifU-like scaffold protein from Plasmodium falciparum (isolate 3D7).